Reading from the N-terminus, the 85-residue chain is V-type proton ATPase subunit f (85 aa).

At 1 to 10 (MRPVVSTGKA) the chain is on the lumenal side. A helical membrane pass occupies residues 11–31 (WCCTVLSAFGVVILSVIAHLF). At 32–54 (NTNHESFVGSINDPEDGPAVAHT) the chain is on the cytoplasmic side. A helical transmembrane segment spans residues 55–75 (VYLAALVYLVFFVFCGFQVYL). Topologically, residues 76-85 (ARRKPSIELR) are lumenal.

As to quaternary structure, V-ATPase is a heteromultimeric enzyme composed of a peripheral catalytic V1 complex (components A to H) attached to an integral membrane V0 proton pore complex (components: a, c, c', c'', d, e, f and VOA1).

The protein resides in the endoplasmic reticulum membrane. Its subcellular location is the vacuole membrane. Its function is as follows. Accessory component of the V0 complex of vacuolar(H+)-ATPase (V-ATPase), a multisubunit enzyme composed of a peripheral complex (V1) that hydrolyzes ATP and a membrane integral complex (V0) that translocates protons. V-ATPase is responsible for acidifying and maintaining the pH of intracellular compartments. The sequence is that of V-type proton ATPase subunit f from Saccharomyces cerevisiae (strain ATCC 204508 / S288c) (Baker's yeast).